The primary structure comprises 579 residues: CTP synthase (579 aa).

Residues 1–281 are amidoligase domain; it reads MPALRKHPQT…DAYVVRRLNL (281 aa). Serine 23 lines the CTP pocket. Serine 23 provides a ligand contact to UTP. ATP contacts are provided by residues 24–29 and aspartate 81; that span reads SLGKGL. Aspartate 81 and glutamate 155 together coordinate Mg(2+). Residues 162 to 164, 202 to 207, and lysine 238 each bind CTP; these read DIE and KTKPTQ. Residues 202-207 and lysine 238 each bind UTP; that span reads KTKPTQ. Residues 306 to 554 form the Glutamine amidotransferase type-1 domain; the sequence is RIALVGKYID…IGAALDYKAA (249 aa). L-glutamine is bound at residue glycine 369. The active-site Nucleophile; for glutamine hydrolysis is cysteine 396. L-glutamine is bound by residues 397-400, glutamate 419, and arginine 480; that span reads LGLQ. Residues histidine 527 and glutamate 529 contribute to the active site.

It belongs to the CTP synthase family. As to quaternary structure, homotetramer.

The enzyme catalyses UTP + L-glutamine + ATP + H2O = CTP + L-glutamate + ADP + phosphate + 2 H(+). It catalyses the reaction L-glutamine + H2O = L-glutamate + NH4(+). The catalysed reaction is UTP + NH4(+) + ATP = CTP + ADP + phosphate + 2 H(+). The protein operates within pyrimidine metabolism; CTP biosynthesis via de novo pathway; CTP from UDP: step 2/2. Allosterically activated by GTP, when glutamine is the substrate; GTP has no effect on the reaction when ammonia is the substrate. The allosteric effector GTP functions by stabilizing the protein conformation that binds the tetrahedral intermediate(s) formed during glutamine hydrolysis. Inhibited by the product CTP, via allosteric rather than competitive inhibition. Functionally, catalyzes the ATP-dependent amination of UTP to CTP with either L-glutamine or ammonia as the source of nitrogen. Regulates intracellular CTP levels through interactions with the four ribonucleotide triphosphates. This chain is CTP synthase, found in Mycobacterium sp. (strain JLS).